A 194-amino-acid chain; its full sequence is dITP/XTP pyrophosphatase (194 aa).

Residue 8 to 13 (TSNPGK) participates in substrate binding. Residues E38 and D67 each contribute to the Mg(2+) site. D67 acts as the Proton acceptor in catalysis. Substrate is bound by residues S68, 152–155 (FGYD), K175, and 180–181 (HR).

It belongs to the HAM1 NTPase family. Homodimer. Mg(2+) is required as a cofactor.

It carries out the reaction XTP + H2O = XMP + diphosphate + H(+). The enzyme catalyses dITP + H2O = dIMP + diphosphate + H(+). The catalysed reaction is ITP + H2O = IMP + diphosphate + H(+). Pyrophosphatase that catalyzes the hydrolysis of nucleoside triphosphates to their monophosphate derivatives, with a high preference for the non-canonical purine nucleotides XTP (xanthosine triphosphate), dITP (deoxyinosine triphosphate) and ITP. Seems to function as a house-cleaning enzyme that removes non-canonical purine nucleotides from the nucleotide pool, thus preventing their incorporation into DNA/RNA and avoiding chromosomal lesions. In Legionella pneumophila (strain Lens), this protein is dITP/XTP pyrophosphatase.